A 264-amino-acid chain; its full sequence is tRNA (guanine-N(1)-)-methyltransferase (264 aa).

Residues glycine 125 and 145–150 contribute to the S-adenosyl-L-methionine site; that span reads LGDFVL.

It belongs to the RNA methyltransferase TrmD family. As to quaternary structure, homodimer.

The protein localises to the cytoplasm. The enzyme catalyses guanosine(37) in tRNA + S-adenosyl-L-methionine = N(1)-methylguanosine(37) in tRNA + S-adenosyl-L-homocysteine + H(+). Functionally, specifically methylates guanosine-37 in various tRNAs. This chain is tRNA (guanine-N(1)-)-methyltransferase, found in Burkholderia cenocepacia (strain ATCC BAA-245 / DSM 16553 / LMG 16656 / NCTC 13227 / J2315 / CF5610) (Burkholderia cepacia (strain J2315)).